The chain runs to 645 residues: 1-deoxy-D-xylulose-5-phosphate synthase (645 aa).

Thiamine diphosphate contacts are provided by residues His-87 and 128–130 (GHS). Asp-159 is a binding site for Mg(2+). Residues 160–161 (GA), Asn-188, Phe-295, and Glu-384 each bind thiamine diphosphate. Asn-188 lines the Mg(2+) pocket.

It belongs to the transketolase family. DXPS subfamily. In terms of assembly, homodimer. Requires Mg(2+) as cofactor. The cofactor is thiamine diphosphate.

The enzyme catalyses D-glyceraldehyde 3-phosphate + pyruvate + H(+) = 1-deoxy-D-xylulose 5-phosphate + CO2. The protein operates within metabolic intermediate biosynthesis; 1-deoxy-D-xylulose 5-phosphate biosynthesis; 1-deoxy-D-xylulose 5-phosphate from D-glyceraldehyde 3-phosphate and pyruvate: step 1/1. In terms of biological role, catalyzes the acyloin condensation reaction between C atoms 2 and 3 of pyruvate and glyceraldehyde 3-phosphate to yield 1-deoxy-D-xylulose-5-phosphate (DXP). This chain is 1-deoxy-D-xylulose-5-phosphate synthase, found in Alcanivorax borkumensis (strain ATCC 700651 / DSM 11573 / NCIMB 13689 / SK2).